A 184-amino-acid polypeptide reads, in one-letter code: Outer-membrane lipoprotein carrier protein (184 aa).

The first 19 residues, 1-19 (MRAFLKILMVLIFMSVAYA), serve as a signal peptide directing secretion.

It belongs to the LolA family. In terms of assembly, monomer.

The protein resides in the periplasm. In terms of biological role, participates in the translocation of lipoproteins from the inner membrane to the outer membrane. Only forms a complex with a lipoprotein if the residue after the N-terminal Cys is not an aspartate (The Asp acts as a targeting signal to indicate that the lipoprotein should stay in the inner membrane). This Helicobacter pylori (strain HPAG1) protein is Outer-membrane lipoprotein carrier protein.